The following is a 511-amino-acid chain: MNQLFVQTEKIVDPREGKLQVVSNVDVCTKIAEFLESTLGPYGMDKLFAGKEIVVTNDGATILKHMNIRHPVGRLLVALSESQDSEVGDGTTSVVILTTEILSCLKPLIKDNFDLGCIKGCLEELRMMCIEHLEKMGMELDDEVLYKLAGTCITSKNIRHEKEYFSRMIVDAVKQAKIDDAESIGVKKVQGGSIGDSVAVNGIAFEKCFTYAGYEQQPKRILNPRILCLNVELEWKSERDNAEIRVGGVEEYQRVVDAEWAIIRRKLDEIISSGANVVLSSLSIGDYATQYFAKHGIFCAGRVSKEDLGRVVGSCGGSILGATDYLEGSLGACALFEERQLGKFRYNYFEGGGTSACTMILRGPGQEVLEEIGRSVHDAVCVVRTALRTRKVVTGGGSVEMELSRIIREKSMKYDDKRMFVAKAVGQAFEKIPLLLARNFGLDTISTIQDLRKRHANGDSCEGISIDGARDMQKLGIYEPLEVKKNMVKASFSAAASIIMIDSTIMAEKSQ.

It belongs to the TCP-1 chaperonin family. As to quaternary structure, component of the T-complex protein 1 (TCP1) complex.

Its subcellular location is the cytoplasm. Molecular chaperone; assists the folding of proteins upon ATP hydrolysis. This Encephalitozoon cuniculi (strain GB-M1) (Microsporidian parasite) protein is T-complex protein 1 subunit eta (CCT7).